The sequence spans 232 residues: Sugar fermentation stimulation protein homolog (232 aa).

It belongs to the SfsA family.

The chain is Sugar fermentation stimulation protein homolog from Ruegeria sp. (strain TM1040) (Silicibacter sp.).